Here is a 208-residue protein sequence, read N- to C-terminus: Cysteine-rich protein 2 (208 aa).

The LIM zinc-binding 1 domain maps to 5–57; the sequence is CPKCDKTVYFAEKVSSLGKDWHKFCLKCERCSKTLTPGGHAEHDGKPFCHKPC. Residue Lys23 is modified to N6-acetyllysine. A disordered region spans residues 98–119; the sequence is AEERKASGPPKGPSRASSVTTF. Residue Ser104 is modified to Phosphoserine. Residues 126–178 enclose the LIM zinc-binding 2 domain; that stretch reads CPRCSKKVYFAEKVTSLGKDWHRPCLRCERCGKTLTPGGHAEHDGQPYCHKPC. N6-acetyllysine occurs at positions 138 and 144.

As to quaternary structure, interacts with TGFB1I1. As to expression, widespread tissue expression; highest levels in the heart.

This is Cysteine-rich protein 2 (CRIP2) from Homo sapiens (Human).